We begin with the raw amino-acid sequence, 111 residues long: uncharacterized protein (111 aa).

This sequence to M.tuberculosis Rv1271c.

This is an uncharacterized protein from Mycobacterium bovis (strain ATCC BAA-935 / AF2122/97).